A 140-amino-acid polypeptide reads, in one-letter code: Nucleoside diphosphate kinase (140 aa).

ATP is bound by residues Lys-9, Phe-57, Arg-85, Thr-91, Arg-102, and Asn-112. The active-site Pros-phosphohistidine intermediate is the His-115.

Belongs to the NDK family. In terms of assembly, homotetramer. Mg(2+) serves as cofactor.

It is found in the cytoplasm. The enzyme catalyses a 2'-deoxyribonucleoside 5'-diphosphate + ATP = a 2'-deoxyribonucleoside 5'-triphosphate + ADP. It catalyses the reaction a ribonucleoside 5'-diphosphate + ATP = a ribonucleoside 5'-triphosphate + ADP. Functionally, major role in the synthesis of nucleoside triphosphates other than ATP. The ATP gamma phosphate is transferred to the NDP beta phosphate via a ping-pong mechanism, using a phosphorylated active-site intermediate. The sequence is that of Nucleoside diphosphate kinase from Chlorobium chlorochromatii (strain CaD3).